A 151-amino-acid polypeptide reads, in one-letter code: uncharacterized protein (151 aa).

Residues 1-151 (MAELASIIRP…SSKTTTLKAR (151 aa)) form a disordered region. A compositionally biased stretch (low complexity) spans 33 to 45 (STGLSDLLMLLQS). Residues 53-64 (RARRRTVCRPRR) are compositionally biased toward basic residues. A compositionally biased stretch (low complexity) spans 108-123 (SSSSNTSSGTATSGES). Over residues 126-141 (ADWRDSSSASDDDRIP) the composition is skewed to basic and acidic residues.

This is an uncharacterized protein from Aotus trivirgatus (Three-striped night monkey).